Here is a 209-residue protein sequence, read N- to C-terminus: rRNA N(6)-adenosine-methyltransferase METTL5 (209 aa).

S-adenosyl-L-methionine-binding positions include Gln28, Thr31, Gly59, Cys62, Val64, Asp81, and 108 to 109; that span reads DV.

Belongs to the methyltransferase superfamily. PrmA family. Heterodimer; heterodimerizes with TRMT112. Ubiquitously expressed in brain.

The protein resides in the nucleus. It localises to the presynapse. Its subcellular location is the postsynapse. It carries out the reaction adenosine(1832) in 18S rRNA + S-adenosyl-L-methionine = N(6)-methyladenosine(1832) in 18S rRNA + S-adenosyl-L-homocysteine + H(+). Its activity is regulated as follows. rRNA N6-adenosine-methyltransferase activity is inhibited by zinc. Catalytic subunit of a heterodimer with TRMT112, which specifically methylates the 6th position of adenine in position 1832 of 18S rRNA. N6-methylation of adenine(1832) in 18S rRNA resides in the decoding center of 18S rRNA and is required for translation and embryonic stem cells (ESCs) pluripotency and differentiation. The chain is rRNA N(6)-adenosine-methyltransferase METTL5 from Mus musculus (Mouse).